A 735-amino-acid polypeptide reads, in one-letter code: FHF complex subunit HOOK-interacting protein 2B (735 aa).

A disordered region spans residues 183 to 229 (SSSTSDEAAEKDCSGSSSPERASSPSSSSSACSLLSRSGAHPVSSPQ). Positions 196 to 221 (SGSSSPERASSPSSSSSACSLLSRSG) are enriched in low complexity.

Belongs to the FHIP family.

In Danio rerio (Zebrafish), this protein is FHF complex subunit HOOK-interacting protein 2B (fhip2b).